A 374-amino-acid chain; its full sequence is UDP-N-acetylglucosamine--N-acetylmuramyl-(pentapeptide) pyrophosphoryl-undecaprenol N-acetylglucosamine transferase (374 aa).

Residues 13 to 15, Asn-124, Arg-165, Ser-193, and Gln-294 each bind UDP-N-acetyl-alpha-D-glucosamine; that span reads TGG.

The protein belongs to the glycosyltransferase 28 family. MurG subfamily.

The protein resides in the cell inner membrane. The enzyme catalyses di-trans,octa-cis-undecaprenyl diphospho-N-acetyl-alpha-D-muramoyl-L-alanyl-D-glutamyl-meso-2,6-diaminopimeloyl-D-alanyl-D-alanine + UDP-N-acetyl-alpha-D-glucosamine = di-trans,octa-cis-undecaprenyl diphospho-[N-acetyl-alpha-D-glucosaminyl-(1-&gt;4)]-N-acetyl-alpha-D-muramoyl-L-alanyl-D-glutamyl-meso-2,6-diaminopimeloyl-D-alanyl-D-alanine + UDP + H(+). The protein operates within cell wall biogenesis; peptidoglycan biosynthesis. Cell wall formation. Catalyzes the transfer of a GlcNAc subunit on undecaprenyl-pyrophosphoryl-MurNAc-pentapeptide (lipid intermediate I) to form undecaprenyl-pyrophosphoryl-MurNAc-(pentapeptide)GlcNAc (lipid intermediate II). The chain is UDP-N-acetylglucosamine--N-acetylmuramyl-(pentapeptide) pyrophosphoryl-undecaprenol N-acetylglucosamine transferase from Rhizobium johnstonii (strain DSM 114642 / LMG 32736 / 3841) (Rhizobium leguminosarum bv. viciae).